The sequence spans 158 residues: Transmembrane protein 50B (158 aa).

Ala-2 carries the N-acetylalanine modification. Helical transmembrane passes span 28–48, 56–76, 98–118, and 128–148; these read VVAG…AVVY, HAFH…NAVS, WLFI…WILF, and VYPG…TLIY.

Belongs to the UPF0220 family. May form homotrimers or homodimers.

The protein localises to the endoplasmic reticulum membrane. It localises to the golgi apparatus membrane. The chain is Transmembrane protein 50B (TMEM50B) from Bos taurus (Bovine).